A 247-amino-acid chain; its full sequence is Cell division protein ZapD (247 aa).

This sequence belongs to the ZapD family. As to quaternary structure, interacts with FtsZ.

The protein localises to the cytoplasm. In terms of biological role, cell division factor that enhances FtsZ-ring assembly. Directly interacts with FtsZ and promotes bundling of FtsZ protofilaments, with a reduction in FtsZ GTPase activity. The chain is Cell division protein ZapD from Klebsiella pneumoniae subsp. pneumoniae (strain ATCC 700721 / MGH 78578).